The primary structure comprises 932 residues: DNA mismatch repair protein MutS (932 aa).

ATP is bound at residue Gly-615–Ser-622.

This sequence belongs to the DNA mismatch repair MutS family.

In terms of biological role, this protein is involved in the repair of mismatches in DNA. It is possible that it carries out the mismatch recognition step. This protein has a weak ATPase activity. The protein is DNA mismatch repair protein MutS of Clostridium botulinum (strain Kyoto / Type A2).